Consider the following 94-residue polypeptide: Co-chaperonin GroES (94 aa).

It belongs to the GroES chaperonin family. As to quaternary structure, heptamer of 7 subunits arranged in a ring. Interacts with the chaperonin GroEL.

It is found in the cytoplasm. Together with the chaperonin GroEL, plays an essential role in assisting protein folding. The GroEL-GroES system forms a nano-cage that allows encapsulation of the non-native substrate proteins and provides a physical environment optimized to promote and accelerate protein folding. GroES binds to the apical surface of the GroEL ring, thereby capping the opening of the GroEL channel. This chain is Co-chaperonin GroES, found in Finegoldia magna (strain ATCC 29328 / DSM 20472 / WAL 2508) (Peptostreptococcus magnus).